We begin with the raw amino-acid sequence, 206 residues long: LexA repressor (206 aa).

The H-T-H motif DNA-binding region spans Arg28 to Lys48. Active-site for autocatalytic cleavage activity residues include Ser123 and Lys160.

This sequence belongs to the peptidase S24 family. In terms of assembly, homodimer.

It catalyses the reaction Hydrolysis of Ala-|-Gly bond in repressor LexA.. In terms of biological role, represses a number of genes involved in the response to DNA damage (SOS response), including recA and lexA. In the presence of single-stranded DNA, RecA interacts with LexA causing an autocatalytic cleavage which disrupts the DNA-binding part of LexA, leading to derepression of the SOS regulon and eventually DNA repair. The chain is LexA repressor from Shewanella sediminis (strain HAW-EB3).